A 164-amino-acid polypeptide reads, in one-letter code: Kunitz-type trypsin inhibitor BrTI (164 aa).

It belongs to the leguminous Kunitz-type inhibitor family.

In terms of biological role, inhibitor of trypsin and human plasma kallikrein with a Ki of 2.9 nM and 14.0 nM, respectively. Does not inhibit chymotrypsin, porcine pancreatic elastas, human neutrophil elastase, coagulation factor Xa, human thrombin, porcine pancreatic kallikrein or plasmin. This is Kunitz-type trypsin inhibitor BrTI from Bauhinia rufa (Orchid tree).